The sequence spans 543 residues: Hydroxylamine reductase (543 aa).

[4Fe-4S] cluster is bound by residues Cys-5, Cys-8, Cys-17, and Cys-23. Hybrid [4Fe-2O-2S] cluster-binding residues include His-250, Glu-274, Cys-318, Cys-410, Cys-438, Cys-463, Glu-498, and Lys-500. Cys-410 is subject to Cysteine persulfide.

Belongs to the HCP family. The cofactor is [4Fe-4S] cluster. Hybrid [4Fe-2O-2S] cluster serves as cofactor.

The protein localises to the cytoplasm. The enzyme catalyses A + NH4(+) + H2O = hydroxylamine + AH2 + H(+). Its function is as follows. Catalyzes the reduction of hydroxylamine to form NH(3) and H(2)O. This chain is Hydroxylamine reductase, found in Petrotoga mobilis (strain DSM 10674 / SJ95).